Consider the following 631-residue polypeptide: MRRAALILAFVLFIGLSSATVTSADSITYNSGTSEFFDGDVFAIEVTADQSTDEIDIYLGASELSEKTDGEVNQDLSIEFTHQDSKLKYSTSTSDELRDIVTLTTYYEDGFDTEQDAIDAIKSDCYDLNQNGNGSGRYSRYYSVTSPVYDYEIYCFQKNEKLATPAYIDNPDEIFTAKAELQAGDKTIQSATLSNGDAGDGTVTDLGDSKISWNGNLDLGASEPENSRVIALYSNDFENGWRIGNKQSYEDYKTFIGGGDAYDLLIDWQDGTYTASEVEDELVNTDANQAVEEASSSTTDLVNAKVKDSSLDTGSFVYDTPELLSYPSFTVYVDAGENGYIEVTKPTGDPDIISTSSTEIKEGDEGTVTATVENVGDGEGEFSGRLSSCGEGFSIVDDQNTKNVGAGESVTYSFDVAFSSVSSESKEISGSCTFEVNGVESSDSTSVSVTGIQQSECNPGDQRREKNENDRWEIYTCQDNGLTYEYDVTCAEDEKAVAQGDNQFSCEKQDDDSGGGDNTGSDSGLFSNLFGGSGSGDLLTQVHTALSILAGLVAGFFGYRGARWIHGETDIKGGFKLESRNVSRVKRGSPVAGIVGAVLGFVVGYGVASVFHPVVQIIVVLGIAVGLYYFR.

A signal peptide spans 1–19 (MRRAALILAFVLFIGLSSA). The tract at residues 20–90 (TVTSADSITY…THQDSKLKYS (71 aa)) is domain I N-terminus. Over 20–537 (TVTSADSITY…NLFGGSGSGD (518 aa)) the chain is Extracellular. The segment at 91 to 170 (TSTSDELRDI…KLATPAYIDN (80 aa)) is domain II N-terminus. The Ca(2+) site is built by Asp-112, Ser-146, Tyr-149, and Asp-150. A disulfide bridge connects residues Cys-125 and Cys-155. Residues 143–148 (SVTSPV) form a fusion loop, required for fusogenic activity, not required for membrane surface localization region. The segment at 171–224 (PDEIFTAKAELQAGDKTIQSATLSNGDAGDGTVTDLGDSKISWNGNLDLGASEP) is domain I central section. A domain II C-terminus region spans residues 225-316 (ENSRVIALYS…KDSSLDTGSF (92 aa)). The segment at 317 to 348 (VYDTPELLSYPSFTVYVDAGENGYIEVTKPTG) is domain I C-terminus. The segment at 349–455 (DPDIISTSST…SVSVTGIQQS (107 aa)) is domain III. 3 disulfides stabilise this stretch: Cys-389-Cys-432, Cys-457-Cys-477, and Cys-490-Cys-506. The interval 443 to 467 (DSTSVSVTGIQQSECNPGDQRREKN) is disordered. The tract at residues 456–509 (ECNPGDQRREKNENDRWEIYTCQDNGLTYEYDVTCAEDEKAVAQGDNQFSCEKQ) is domain IV, required for fusogenic activity. The segment at 510-537 (DDDSGGGDNTGSDSGLFSNLFGGSGSGD) is stem. Residues 538-558 (LLTQVHTALSILAGLVAGFFG) traverse the membrane as a helical segment. Topologically, residues 559 to 590 (YRGARWIHGETDIKGGFKLESRNVSRVKRGSP) are cytoplasmic. The helical transmembrane segment at 591–611 (VAGIVGAVLGFVVGYGVASVF) threads the bilayer. His-612 is a topological domain (extracellular). The chain crosses the membrane as a helical span at residues 613–630 (PVVQIIVVLGIAVGLYYF). Position 631 (Arg-631) is a topological domain, cytoplasmic.

The protein belongs to the HAP2/GCS1 family. Fusexin 1 subfamily. As to quaternary structure, monomer in solution, crystallizes as a trimer in high salt (2.5 M NaCl, 0.2 M CaCl(2)). The trimer is stabilized by interdomain contacts and numerous Ca(2+) and Na(+) ions.

Its subcellular location is the cell surface. It is found in the cell membrane. Its function is as follows. Exhibits fusogenic activity. Mediates cell-cell fusion in mammalian cells when present in both cells (bilateral fusion). This chain is Fusexin 1, found in Uncultured archaeon.